A 303-amino-acid polypeptide reads, in one-letter code: L(+)-tartrate dehydratase subunit alpha (303 aa).

Cysteine 71, cysteine 190, and cysteine 277 together coordinate iron-sulfur cluster.

The protein belongs to the class-I fumarase family. As to quaternary structure, tetramer of two alpha and two beta subunits. The cofactor is iron-sulfur cluster.

It carries out the reaction (2R,3R)-tartrate = oxaloacetate + H2O. In Escherichia coli O6:H1 (strain CFT073 / ATCC 700928 / UPEC), this protein is L(+)-tartrate dehydratase subunit alpha (ttdA).